An 831-amino-acid polypeptide reads, in one-letter code: Heat shock 70 kDa protein 15 (831 aa).

Disordered regions lie at residues 502–579 (EEEV…KKKV) and 784–831 (IMTK…EGST). The segment covering 512-526 (DQSEETAKMDTDKAS) has biased composition (basic and acidic residues). A phosphoserine mark is found at S533 and S536. Residues 787 to 800 (KPKPAAKAEAPQAK) show a composition bias toward low complexity.

Belongs to the heat shock protein 70 (TC 1.A.33) family. HSP110/SSE subfamily.

Its subcellular location is the cytoplasm. The protein localises to the nucleus. Its function is as follows. In cooperation with other chaperones, Hsp70s are key components that facilitate folding of de novo synthesized proteins, assist translocation of precursor proteins into organelles, and are responsible for degradation of damaged protein under stress conditions. This chain is Heat shock 70 kDa protein 15 (HSP70-15), found in Arabidopsis thaliana (Mouse-ear cress).